Here is a 282-residue protein sequence, read N- to C-terminus: Bifunctional protein FolD (282 aa).

Residues 164–166 (GAS), isoleucine 189, and isoleucine 230 contribute to the NADP(+) site.

This sequence belongs to the tetrahydrofolate dehydrogenase/cyclohydrolase family. As to quaternary structure, homodimer.

The enzyme catalyses (6R)-5,10-methylene-5,6,7,8-tetrahydrofolate + NADP(+) = (6R)-5,10-methenyltetrahydrofolate + NADPH. It carries out the reaction (6R)-5,10-methenyltetrahydrofolate + H2O = (6R)-10-formyltetrahydrofolate + H(+). The protein operates within one-carbon metabolism; tetrahydrofolate interconversion. In terms of biological role, catalyzes the oxidation of 5,10-methylenetetrahydrofolate to 5,10-methenyltetrahydrofolate and then the hydrolysis of 5,10-methenyltetrahydrofolate to 10-formyltetrahydrofolate. In Campylobacter jejuni subsp. doylei (strain ATCC BAA-1458 / RM4099 / 269.97), this protein is Bifunctional protein FolD.